The primary structure comprises 140 residues: Cytochrome c oxidase subunit 6, mitochondrial (140 aa).

Belongs to the cytochrome c oxidase subunit 5A family. As to quaternary structure, component of the cytochrome c oxidase (complex IV, CIV), a multisubunit enzyme composed of a catalytic core of 3 subunits and several supernumerary subunits. The complex exists as a monomer or a dimer and forms supercomplexes (SCs) in the inner mitochondrial membrane with ubiquinol-cytochrome c oxidoreductase (cytochrome b-c1 complex, complex III, CIII).

It is found in the mitochondrion inner membrane. Its pathway is energy metabolism; oxidative phosphorylation. In terms of biological role, component of the cytochrome c oxidase, the last enzyme in the mitochondrial electron transport chain which drives oxidative phosphorylation. The respiratory chain contains 3 multisubunit complexes succinate dehydrogenase (complex II, CII), ubiquinol-cytochrome c oxidoreductase (cytochrome b-c1 complex, complex III, CIII) and cytochrome c oxidase (complex IV, CIV), that cooperate to transfer electrons derived from NADH and succinate to molecular oxygen, creating an electrochemical gradient over the inner membrane that drives transmembrane transport and the ATP synthase. Cytochrome c oxidase is the component of the respiratory chain that catalyzes the reduction of oxygen to water. Electrons originating from reduced cytochrome c in the intermembrane space (IMS) are transferred via the dinuclear copper A center (CU(A)) of subunit 2 and heme A of subunit 1 to the active site in subunit 1, a binuclear center (BNC) formed by heme A3 and copper B (CU(B)). The BNC reduces molecular oxygen to 2 water molecules using 4 electrons from cytochrome c in the IMS and 4 protons from the mitochondrial matrix. This chain is Cytochrome c oxidase subunit 6, mitochondrial (cox6), found in Schizosaccharomyces pombe (strain 972 / ATCC 24843) (Fission yeast).